The following is a 676-amino-acid chain: Ion-translocating oxidoreductase complex subunit C (676 aa).

4Fe-4S ferredoxin-type domains follow at residues 369–397 (GEPQ…QQLY) and 407–436 (KATT…VQYF). Residues Cys-377, Cys-380, Cys-383, Cys-387, Cys-416, Cys-419, Cys-422, and Cys-426 each contribute to the [4Fe-4S] cluster site. The disordered stretch occupies residues 600-652 (ARKLEQQQANAEPEQQVDPRKAAVEAAIARAKARKLEQQQANAEPEEQVDPRK). The span at 605-615 (QQQANAEPEQQ) shows a compositional bias: low complexity.

Belongs to the 4Fe4S bacterial-type ferredoxin family. RnfC subfamily. The complex is composed of six subunits: RsxA, RsxB, RsxC, RsxD, RsxE and RsxG. It depends on [4Fe-4S] cluster as a cofactor.

The protein resides in the cell inner membrane. Part of a membrane-bound complex that couples electron transfer with translocation of ions across the membrane. Required to maintain the reduced state of SoxR. The polypeptide is Ion-translocating oxidoreductase complex subunit C (Escherichia coli (strain SMS-3-5 / SECEC)).